A 228-amino-acid polypeptide reads, in one-letter code: THAP domain-containing protein 2 (228 aa).

Residues 1–80 form a THAP-type zinc finger; sequence MPTNCAAAGC…LKMDAVPTIF (80 aa). The short motif at 123–126 is the HCFC1-binding motif (HBM) element; sequence EHSY.

This is THAP domain-containing protein 2 (THAP2) from Homo sapiens (Human).